Here is a 280-residue protein sequence, read N- to C-terminus: Eukaryotic translation initiation factor 3 subunit F-1 (280 aa).

Residues 8 to 138 (VRVHPVVLFQ…LRAYVCIQLG (131 aa)) enclose the MPN domain.

Belongs to the eIF-3 subunit F family. Component of the eukaryotic translation initiation factor 3 (eIF-3) complex. The eIF-3 complex interacts with pix.

The protein resides in the cytoplasm. In terms of biological role, component of the eukaryotic translation initiation factor 3 (eIF-3) complex, which is involved in protein synthesis of a specialized repertoire of mRNAs and, together with other initiation factors, stimulates binding of mRNA and methionyl-tRNAi to the 40S ribosome. The eIF-3 complex specifically targets and initiates translation of a subset of mRNAs involved in cell proliferation. The protein is Eukaryotic translation initiation factor 3 subunit F-1 of Drosophila virilis (Fruit fly).